Reading from the N-terminus, the 361-residue chain is U7 snRNA-associated Sm-like protein LSm11 (361 aa).

Positions 1-26 (MEEREWGARSARAGSPASPPSPRLDV) are disordered. Phosphoserine occurs at positions 15 and 21. R41 carries the omega-N-methylarginine modification. The tract at residues 67-142 (RTGRGRARGT…QGPGRSKKAP (76 aa)) is disordered. Low complexity predominate over residues 76-96 (TGEPASAGTSTGTSTGAGSSS). K121 is covalently cross-linked (Glycyl lysine isopeptide (Lys-Gly) (interchain with G-Cter in SUMO2)). S155 bears the Phosphoserine mark. The Sm domain occupies 155–230 (SPLGELHRCI…LTLTRLFDRL (76 aa)). The tract at residues 172 to 205 (VHIRTFKGLRGVCTGFLVAFDKFWNMALTDVDET) is SM 1. The disordered stretch occupies residues 268-335 (RGDTDRSSHR…RKKKRKPKVD (68 aa)). S281 carries the post-translational modification Phosphoserine. Polar residues predominate over residues 307-323 (GSSVGGTFSRATTLSRG). The interval 344 to 357 (INQIFIRGENVLLV) is SM 2.

Belongs to the snRNP Sm proteins family. In terms of assembly, component of the heptameric ring U7 snRNP complex, or U7 Sm protein core complex, at least composed of LSM10, LSM11, SNRPB, SNRPD3, SNRPE, SNRPF, SNRPG and U7 snRNA. Formation of the U7 snRNP is an ATP-dependent process mediated by a specialized SMN complex containing at least the Sm protein core complex and additionally, the U7-specific LSM10 and LSM11 proteins. Identified in a histone pre-mRNA complex, at least composed of ERI1, LSM11, SLBP, SNRPB, SYNCRIP and YBX1. Interacts (via the Sm domains) with CLNS1A. Interacts with PRMT5, SMN, ZNF473 and WDR77. Not methylated.

The protein localises to the nucleus. Component of the U7 snRNP complex that is involved in the histone 3'-end pre-mRNA processing. Increases U7 snRNA levels but not histone 3'-end pre-mRNA processing activity, when overexpressed. Required for cell cycle progression from G1 to S phases. Binds specifically to the Sm-binding site of U7 snRNA. The chain is U7 snRNA-associated Sm-like protein LSm11 from Mus musculus (Mouse).